The chain runs to 401 residues: O-methyltransferase mfmE (401 aa).

Residues 243-244 and Asp-268 each bind S-adenosyl-L-methionine; that span reads GG. His-308 functions as the Proton acceptor in the catalytic mechanism.

It belongs to the class I-like SAM-binding methyltransferase superfamily. Cation-independent O-methyltransferase family. COMT subfamily.

It participates in secondary metabolite biosynthesis; terpenoid biosynthesis. Its function is as follows. O-methyltransferase; part of the gene cluster that mediates the biosynthesis of the phthalide-terpenoid hybrid 11'-O-desmethylfendlerol. Within the pathway, mfmE catalyzes the 7-O-methylation of the phthalide 5,7-dihydroxy-4-(hydroxymethyl)-6-methylphthalide to yield 5-hydroxy-4-(hydroxymethyl)-7-methoxy-6-methylphthalide. The biosynthesis of 11'-O-desmethylfendlerol begins with the NR-PKS mfmB that forms 3,5-dimethylorsellinic acid (DMOA), which is then transformed into the phthalide 5,7-dihydroxy-4-(hydroxymethyl)-6-methylphthalide by the cytochrome P450 monooxygenase mfmA and the hydrolase mfmC. Subsequently, the methyltransferase mfmE catalyzes 7-O-methylation to yield 5-hydroxy-4-(hydroxymethyl)-7-methoxy-6-methylphthalide, which undergoes C-3 hydroxylation by the cytochrome P450 monooxygenase mfmF. The resultant cyclopolic acid (2,5-dihydroxy-4-(hydroxymethyl)-7-methoxy-6-methylphthalide) is then farnesylated by the DMATS-type prenyltransferase mfmD to afford 5-O-farnesylcyclopolic acid. Finally, the Pyr4-family terpene cyclase mfmH cyclizes the farnesyl moiety of 5-O-farnesylcyclopolic acid into a drimane-like structure, thus completing the biosynthesis of 11'-O-desmethylfendlerol. The polypeptide is O-methyltransferase mfmE (Annulohypoxylon moriforme (Filamentous fungus)).